Here is a 279-residue protein sequence, read N- to C-terminus: Probable endonuclease 4 (279 aa).

His-66, His-106, Glu-142, Asp-176, His-179, His-213, Asp-226, His-228, and Glu-258 together coordinate Zn(2+).

The protein belongs to the AP endonuclease 2 family. The cofactor is Zn(2+).

It catalyses the reaction Endonucleolytic cleavage to 5'-phosphooligonucleotide end-products.. In terms of biological role, endonuclease IV plays a role in DNA repair. It cleaves phosphodiester bonds at apurinic or apyrimidinic (AP) sites, generating a 3'-hydroxyl group and a 5'-terminal sugar phosphate. This is Probable endonuclease 4 from Photobacterium profundum (strain SS9).